Consider the following 1004-residue polypeptide: NACHT, LRR and PYD domains-containing protein 9C (1004 aa).

The 92-residue stretch at 1 to 92 (MVDSSSYGLL…TMAQIERRDK (92 aa)) folds into the Pyrin domain. Residues 143–465 (ATAVVLGTRG…KQDKDTYHPV (323 aa)) form the NACHT domain. Position 149-156 (149-156 (GTRGKGKT)) interacts with ATP. LRR repeat units follow at residues 750-770 (KVKHLSLVENPLKNKGVMFLC), 779-800 (VLESLMLSYCCLTFIACGHLYE), 807-828 (HLSLLDLGSNFLEDIGVNLLCE), 836-857 (TLKELWLPGCYLTSECCEEISA), and 864-884 (NLKTLKLGNNNIQDTGVKRLC).

The protein belongs to the NLRP family. In terms of tissue distribution, oocyte specific.

Its subcellular location is the cytoplasm. Its function is as follows. May be involved in inflammation. This chain is NACHT, LRR and PYD domains-containing protein 9C (Nlrp9c), found in Mus musculus (Mouse).